The following is a 300-amino-acid chain: tRNA dimethylallyltransferase (300 aa).

Residue 11 to 18 (GPTAVGKS) participates in ATP binding. 13 to 18 (TAVGKS) is a binding site for substrate. The tract at residues 35 to 38 (DSIQ) is interaction with substrate tRNA.

The protein belongs to the IPP transferase family. Monomer. The cofactor is Mg(2+).

It carries out the reaction adenosine(37) in tRNA + dimethylallyl diphosphate = N(6)-dimethylallyladenosine(37) in tRNA + diphosphate. In terms of biological role, catalyzes the transfer of a dimethylallyl group onto the adenine at position 37 in tRNAs that read codons beginning with uridine, leading to the formation of N6-(dimethylallyl)adenosine (i(6)A). This is tRNA dimethylallyltransferase from Borrelia turicatae (strain 91E135).